Consider the following 303-residue polypeptide: Inosose dehydratase (303 aa).

Belongs to the IolE/MocC family. Glutathione is required as a cofactor. The cofactor is Co(2+). Requires Mn(2+) as cofactor.

The enzyme catalyses scyllo-inosose = 3D-3,5/4-trihydroxycyclohexane-1,2-dione + H2O. It functions in the pathway polyol metabolism; myo-inositol degradation into acetyl-CoA; acetyl-CoA from myo-inositol: step 2/7. Catalyzes the dehydration of inosose (2-keto-myo-inositol, 2KMI or 2,4,6/3,5-pentahydroxycyclohexanone) to 3D-(3,5/4)-trihydroxycyclohexane-1,2-dione (D-2,3-diketo-4-deoxy-epi-inositol). The protein is Inosose dehydratase of Halalkalibacterium halodurans (strain ATCC BAA-125 / DSM 18197 / FERM 7344 / JCM 9153 / C-125) (Bacillus halodurans).